Here is a 657-residue protein sequence, read N- to C-terminus: UvrABC system protein B (657 aa).

Residues lysine 23–arginine 414 enclose the Helicase ATP-binding domain. Residue glycine 36–threonine 43 coordinates ATP. Positions tyrosine 89–threonine 112 match the Beta-hairpin motif. In terms of domain architecture, Helicase C-terminal spans glutamine 431–isoleucine 593. A UVR domain is found at alanine 622–leucine 657.

This sequence belongs to the UvrB family. As to quaternary structure, forms a heterotetramer with UvrA during the search for lesions. Interacts with UvrC in an incision complex.

It localises to the cytoplasm. The UvrABC repair system catalyzes the recognition and processing of DNA lesions. A damage recognition complex composed of 2 UvrA and 2 UvrB subunits scans DNA for abnormalities. Upon binding of the UvrA(2)B(2) complex to a putative damaged site, the DNA wraps around one UvrB monomer. DNA wrap is dependent on ATP binding by UvrB and probably causes local melting of the DNA helix, facilitating insertion of UvrB beta-hairpin between the DNA strands. Then UvrB probes one DNA strand for the presence of a lesion. If a lesion is found the UvrA subunits dissociate and the UvrB-DNA preincision complex is formed. This complex is subsequently bound by UvrC and the second UvrB is released. If no lesion is found, the DNA wraps around the other UvrB subunit that will check the other stand for damage. The sequence is that of UvrABC system protein B from Campylobacter jejuni (strain RM1221).